The chain runs to 339 residues: 2-deoxy-scyllo-inosamine dehydrogenase (339 aa).

7 residues coordinate Zn(2+): Cys-37, His-59, Cys-88, Cys-91, Cys-94, Cys-102, and Glu-143.

The protein belongs to the zinc-containing alcohol dehydrogenase family. DOIA dehydrogenase subfamily. Zn(2+) serves as cofactor.

The enzyme catalyses 2-deoxy-scyllo-inosamine + NADP(+) = 3-amino-2,3-dideoxy-scyllo-inosose + NADPH + H(+). It catalyses the reaction 2-deoxy-scyllo-inosamine + NAD(+) = 3-amino-2,3-dideoxy-scyllo-inosose + NADH + H(+). Its pathway is metabolic intermediate biosynthesis; 2-deoxystreptamine biosynthesis; 2-deoxystreptamine from D-glucose 6-phosphate: step 3/4. The protein operates within antibiotic biosynthesis; tobramycin biosynthesis. Catalyzes the oxidation of 2-deoxy-scyllo-inosamine (DOIA) with NAD(+) or NADP(+), forming 3-amino-2,3-dideoxy-scyllo-inosose (amino-DOI). The chain is 2-deoxy-scyllo-inosamine dehydrogenase (tobE) from Streptoalloteichus tenebrarius (strain ATCC 17920 / DSM 40477 / JCM 4838 / CBS 697.72 / NBRC 16177 / NCIMB 11028 / NRRL B-12390 / A12253. 1 / ISP 5477) (Streptomyces tenebrarius).